A 77-amino-acid chain; its full sequence is U8-lycotoxin-Ls1l (77 aa).

A signal peptide spans 1–20 (MKLMIFTGLVLFAIVSLIEA). A propeptide spanning residues 21-26 (QAENEK) is cleaved from the precursor.

It belongs to the neurotoxin 19 (CSTX) family. 08 (U8-Lctx) subfamily. In terms of processing, contains 4 disulfide bonds. In terms of tissue distribution, expressed by the venom gland.

Its subcellular location is the secreted. The polypeptide is U8-lycotoxin-Ls1l (Lycosa singoriensis (Wolf spider)).